Consider the following 1093-residue polypeptide: ATP-dependent helicase/deoxyribonuclease subunit B (1093 aa).

Belongs to the helicase family. AddB/RexB type 2 subfamily. As to quaternary structure, heterodimer of AddA and RexB. Mg(2+) is required as a cofactor.

Its function is as follows. The heterodimer acts as both an ATP-dependent DNA helicase and an ATP-dependent, dual-direction single-stranded exonuclease. Recognizes the chi site generating a DNA molecule suitable for the initiation of homologous recombination. This subunit has 5' -&gt; 3' nuclease activity but not helicase activity. The chain is ATP-dependent helicase/deoxyribonuclease subunit B from Streptococcus sanguinis (strain SK36).